Consider the following 587-residue polypeptide: MFS-type transporter opaD (587 aa).

The next 9 helical transmembrane spans lie at V87–L107, M124–L146, W153–P173, I184–V204, G214–F234, W242–F262, I284–G304, I315–W335, and L357–F377. N-linked (GlcNAc...) asparagine glycosylation is present at N382. The next 5 helical transmembrane spans lie at I393–L413, G414–L434, I447–V467, L483–F503, and V554–W574.

This sequence belongs to the major facilitator superfamily. TCR/Tet family.

Its subcellular location is the membrane. Functionally, MFS-type transporter; part of the gene cluster that mediates the biosynthesis of oxepinamides, derivatives of anthranilyl-containing tripeptides that share an oxepin ring and a fused pyrimidinone moiety. The polypeptide is MFS-type transporter opaD (Aspergillus ustus).